Here is a 180-residue protein sequence, read N- to C-terminus: Protein SPMIP9 (180 aa).

Microtubule inner protein component of sperm flagellar doublet microtubules. In terms of tissue distribution, testis-specific. Detected in the germ cell lineage at all stages.

The protein resides in the nucleus. It is found in the cytoplasm. It localises to the cytoskeleton. The protein localises to the flagellum axoneme. In terms of biological role, microtubule inner protein (MIP) part of the dynein-decorated doublet microtubules (DMTs) in flagella axoneme. This is Protein SPMIP9 from Homo sapiens (Human).